The sequence spans 449 residues: 3-phosphoshikimate 1-carboxyvinyltransferase (449 aa).

A disordered region spans residues 1-23 (MSHSASPKPATARRSEALTGEIR). Residues Lys-28, Ser-29, and Arg-33 each coordinate 3-phosphoshikimate. Position 28 (Lys-28) interacts with phosphoenolpyruvate. Phosphoenolpyruvate is bound by residues Gly-100 and Arg-128. Ser-173, Gln-175, Asp-326, and Lys-353 together coordinate 3-phosphoshikimate. Residue Gln-175 participates in phosphoenolpyruvate binding. The Proton acceptor role is filled by Asp-326. Positions 357 and 402 each coordinate phosphoenolpyruvate.

Belongs to the EPSP synthase family. As to quaternary structure, monomer.

The protein resides in the cytoplasm. It carries out the reaction 3-phosphoshikimate + phosphoenolpyruvate = 5-O-(1-carboxyvinyl)-3-phosphoshikimate + phosphate. It participates in metabolic intermediate biosynthesis; chorismate biosynthesis; chorismate from D-erythrose 4-phosphate and phosphoenolpyruvate: step 6/7. Its function is as follows. Catalyzes the transfer of the enolpyruvyl moiety of phosphoenolpyruvate (PEP) to the 5-hydroxyl of shikimate-3-phosphate (S3P) to produce enolpyruvyl shikimate-3-phosphate and inorganic phosphate. In Pseudomonas sp. (strain PG2982), this protein is 3-phosphoshikimate 1-carboxyvinyltransferase.